The following is a 205-amino-acid chain: Putative 3-methyladenine DNA glycosylase (205 aa).

It belongs to the DNA glycosylase MPG family.

The protein is Putative 3-methyladenine DNA glycosylase of Clostridium perfringens (strain 13 / Type A).